The chain runs to 362 residues: Probable RNA methyltransferase Tbd_1951 (362 aa).

The active-site Proton acceptor is the glutamate 89. Positions 92 to 318 constitute a Radical SAM core domain; that stretch reads LLPRDGVCVS…AKLRHSAGQD (227 aa). Cysteine 99 and cysteine 323 are joined by a disulfide. 3 residues coordinate [4Fe-4S] cluster: cysteine 106, cysteine 110, and cysteine 113. Residues 151-152, serine 181, 204-206, and asparagine 280 each bind S-adenosyl-L-methionine; these read GE and SLH. Cysteine 323 functions as the S-methylcysteine intermediate in the catalytic mechanism. Positions 342–362 are disordered; it reads LPSAETPAASPKAAASIGFPG. A compositionally biased stretch (low complexity) spans 343–362; that stretch reads PSAETPAASPKAAASIGFPG.

It belongs to the radical SAM superfamily. RlmN family. The cofactor is [4Fe-4S] cluster.

It localises to the cytoplasm. The chain is Probable RNA methyltransferase Tbd_1951 from Thiobacillus denitrificans (strain ATCC 25259 / T1).